The chain runs to 71 residues: Small ribosomal subunit protein bS21 (71 aa).

The span at 48–59 (EKASLAKRHAKR) shows a compositional bias: basic residues. Positions 48-71 (EKASLAKRHAKRNARENARNTRLY) are disordered. Positions 60 to 71 (NARENARNTRLY) are enriched in basic and acidic residues.

The protein belongs to the bacterial ribosomal protein bS21 family.

The protein is Small ribosomal subunit protein bS21 of Actinobacillus pleuropneumoniae serotype 5b (strain L20).